Consider the following 487-residue polypeptide: Variant surface glycoprotein WRATAT B (487 aa).

The N-terminal stretch at 1–19 (MWIILALLTLAGSRVAHGA) is a signal peptide. 4 N-linked (GlcNAc...) asparagine glycosylation sites follow: Asn71, Asn84, Asn418, and Asn465. The interval 443–468 (KPKAGTEAATTGPGERDAGATANTTG) is disordered. Ser470 carries the GPI-anchor amidated serine lipid modification. A propeptide spans 471–487 (NSFVIKTSPLLFAFLLF) (removed in mature form).

It is found in the cell membrane. Its function is as follows. VSG forms a coat on the surface of the parasite. The trypanosome evades the immune response of the host by expressing a series of antigenically distinct VSGs from an estimated 1000 VSG genes. The protein is Variant surface glycoprotein WRATAT B of Trypanosoma brucei rhodesiense.